The chain runs to 303 residues: Probable alpha-L-glutamate ligase 1 (303 aa).

Residues 104–287 (LQLLSRKGVG…IAGLIYSFIE (184 aa)) form the ATP-grasp domain. Residues Lys141, 178–179 (EF), Asp187, and 211–213 (RSN) contribute to the ATP site. Positions 248, 260, and 262 each coordinate Mg(2+). Mn(2+) contacts are provided by Asp248, Glu260, and Asn262.

This sequence belongs to the RimK family. The cofactor is Mg(2+). Requires Mn(2+) as cofactor.

This chain is Probable alpha-L-glutamate ligase 1, found in Hahella chejuensis (strain KCTC 2396).